Here is a 65-residue protein sequence, read N- to C-terminus: DNA-directed RNA polymerase subunit Rpo10 (65 aa).

Residues C7, C10, C44, and C45 each contribute to the Zn(2+) site.

The protein belongs to the archaeal Rpo10/eukaryotic RPB10 RNA polymerase subunit family. As to quaternary structure, part of the RNA polymerase complex. Zn(2+) is required as a cofactor.

The protein resides in the cytoplasm. It carries out the reaction RNA(n) + a ribonucleoside 5'-triphosphate = RNA(n+1) + diphosphate. In terms of biological role, DNA-dependent RNA polymerase (RNAP) catalyzes the transcription of DNA into RNA using the four ribonucleoside triphosphates as substrates. This chain is DNA-directed RNA polymerase subunit Rpo10, found in Pyrobaculum arsenaticum (strain DSM 13514 / JCM 11321 / PZ6).